The primary structure comprises 227 residues: Cytochrome c oxidase subunit 2 (227 aa).

At 1-14 (MAYPLQMGLQDATS) the chain is on the mitochondrial intermembrane side. The helical transmembrane segment at 15 to 45 (PIMEELLHFHDHTLMIVFLISSLVLYIISLM) threads the bilayer. At 46 to 59 (LTTKLTHTSTMDAQ) the chain is on the mitochondrial matrix side. A helical membrane pass occupies residues 60–87 (EVETVWTILPAIILILIALPSLRILYMM). The Mitochondrial intermembrane portion of the chain corresponds to 88 to 227 (DEINNPSLTV…HFEKWSTSML (140 aa)). Residues H161, C196, E198, C200, H204, and M207 each contribute to the Cu cation site. E198 is a binding site for Mg(2+).

Belongs to the cytochrome c oxidase subunit 2 family. As to quaternary structure, component of the cytochrome c oxidase (complex IV, CIV), a multisubunit enzyme composed of 14 subunits. The complex is composed of a catalytic core of 3 subunits MT-CO1, MT-CO2 and MT-CO3, encoded in the mitochondrial DNA, and 11 supernumerary subunits COX4I, COX5A, COX5B, COX6A, COX6B, COX6C, COX7A, COX7B, COX7C, COX8 and NDUFA4, which are encoded in the nuclear genome. The complex exists as a monomer or a dimer and forms supercomplexes (SCs) in the inner mitochondrial membrane with NADH-ubiquinone oxidoreductase (complex I, CI) and ubiquinol-cytochrome c oxidoreductase (cytochrome b-c1 complex, complex III, CIII), resulting in different assemblies (supercomplex SCI(1)III(2)IV(1) and megacomplex MCI(2)III(2)IV(2)). Found in a complex with TMEM177, COA6, COX18, COX20, SCO1 and SCO2. Interacts with TMEM177 in a COX20-dependent manner. Interacts with COX20. Interacts with COX16. Requires Cu cation as cofactor.

It is found in the mitochondrion inner membrane. It carries out the reaction 4 Fe(II)-[cytochrome c] + O2 + 8 H(+)(in) = 4 Fe(III)-[cytochrome c] + 2 H2O + 4 H(+)(out). In terms of biological role, component of the cytochrome c oxidase, the last enzyme in the mitochondrial electron transport chain which drives oxidative phosphorylation. The respiratory chain contains 3 multisubunit complexes succinate dehydrogenase (complex II, CII), ubiquinol-cytochrome c oxidoreductase (cytochrome b-c1 complex, complex III, CIII) and cytochrome c oxidase (complex IV, CIV), that cooperate to transfer electrons derived from NADH and succinate to molecular oxygen, creating an electrochemical gradient over the inner membrane that drives transmembrane transport and the ATP synthase. Cytochrome c oxidase is the component of the respiratory chain that catalyzes the reduction of oxygen to water. Electrons originating from reduced cytochrome c in the intermembrane space (IMS) are transferred via the dinuclear copper A center (CU(A)) of subunit 2 and heme A of subunit 1 to the active site in subunit 1, a binuclear center (BNC) formed by heme A3 and copper B (CU(B)). The BNC reduces molecular oxygen to 2 water molecules using 4 electrons from cytochrome c in the IMS and 4 protons from the mitochondrial matrix. This Halichoerus grypus (Gray seal) protein is Cytochrome c oxidase subunit 2 (MT-CO2).